We begin with the raw amino-acid sequence, 276 residues long: NADPH-dependent 7-cyano-7-deazaguanine reductase (276 aa).

Position 83–85 (83–85 (IES)) interacts with substrate. Residue 85 to 86 (SK) coordinates NADPH. The active-site Thioimide intermediate is cysteine 184. The Proton donor role is filled by aspartate 191. 223–224 (HE) contributes to the substrate binding site. Position 252–253 (252–253 (RG)) interacts with NADPH.

This sequence belongs to the GTP cyclohydrolase I family. QueF type 2 subfamily. Homodimer.

It localises to the cytoplasm. It carries out the reaction 7-aminomethyl-7-carbaguanine + 2 NADP(+) = 7-cyano-7-deazaguanine + 2 NADPH + 3 H(+). It participates in tRNA modification; tRNA-queuosine biosynthesis. Functionally, catalyzes the NADPH-dependent reduction of 7-cyano-7-deazaguanine (preQ0) to 7-aminomethyl-7-deazaguanine (preQ1). The sequence is that of NADPH-dependent 7-cyano-7-deazaguanine reductase from Pseudomonas fluorescens (strain ATCC BAA-477 / NRRL B-23932 / Pf-5).